Consider the following 358-residue polypeptide: MTAHIRPDLASIPAYVPGRNFPGAIKLASNETTVGPLPGVRDAVADAVANANRYPDNAAVALIEALASFLKVEPANVAAGCGSVTLCQELVQITCDQGDEVIYAWRSFEAYPVVTQVGHAVSVKVPLTEDFGHDLDAMLAAITDRTRLIFVCNPNNPTGNALSKAELESFLDAVPAHVVVALDEAYFEYSRSDADGIELFRSRPNVVVLRTFSKAYGLAGIRVGYAVADPEIIVALGKVHTPFTVSAVAQAAAIASLAAADELLARTEGVIAERTRVRTALIEAGYTVPESSANFVYLPLGELSPAFAEASTEAGILIRQYGVEGVRMTIGDPHENDAFLAFADTDVAKQAAGIGVSA.

Lys214 is modified (N6-(pyridoxal phosphate)lysine).

It belongs to the class-II pyridoxal-phosphate-dependent aminotransferase family. Homodimer. Pyridoxal 5'-phosphate serves as cofactor.

The enzyme catalyses an aromatic L-alpha-amino acid + 2-oxoglutarate = an aromatic oxo-acid + L-glutamate. Functionally, aminotransferase that catalyzes the conversion of aromatic amino acids and 2-oxoglutarate into corresponding aromatic oxo acids and L-glutamate. This chain is Aromatic amino acid aminotransferase, found in Rhodococcus erythropolis (strain PR4 / NBRC 100887).